The following is a 256-amino-acid chain: Small ribosomal subunit protein uS2 (256 aa).

The protein belongs to the universal ribosomal protein uS2 family.

In Acidiphilium cryptum (strain JF-5), this protein is Small ribosomal subunit protein uS2.